Here is a 561-residue protein sequence, read N- to C-terminus: Potassium-transporting ATPase potassium-binding subunit (561 aa).

10 helical membrane passes run 4–24 (IVMQ…PLGI), 65–85 (AVSV…VLML), 133–153 (IGLT…LFAV), 177–197 (LYIL…QGVV), 253–273 (FTNL…VVMF), 285–305 (AIMT…TISE), 380–400 (GLYG…LLVG), 417–437 (MVCL…AVAV), 484–504 (MVGA…ALYL), and 528–548 (FIGL…LPAL).

It belongs to the KdpA family. In terms of assembly, the system is composed of three essential subunits: KdpA, KdpB and KdpC.

It localises to the cell membrane. Functionally, part of the high-affinity ATP-driven potassium transport (or Kdp) system, which catalyzes the hydrolysis of ATP coupled with the electrogenic transport of potassium into the cytoplasm. This subunit binds the extracellular potassium ions and delivers the ions to the membrane domain of KdpB through an intramembrane tunnel. This is Potassium-transporting ATPase potassium-binding subunit from Listeria monocytogenes serotype 4a (strain HCC23).